Consider the following 252-residue polypeptide: MSRTPIIAGNWKLNMNPKETVEFVNAVKDQLPDPSKVESVICAPAVDLDALLKAAEGSNLHVGAENCYWENSGAFTGETSPAVLKEMGVQYVIIGHSERRDYFHETDEDINKKAKAIFANGLTPILCCGESLETREAGKENEWVVSQIKAGLEGLTSEQVSKLVIAYEPIWAIGTGKTASSDQAEEMCKTIRETVKDLYNEETAENVRIQYGGSVKPANVKELMAKPNIDGGLVGGASLVPDSYLALVNYQD.

Position 10–12 (10–12 (NWK)) interacts with substrate. Catalysis depends on His96, which acts as the Electrophile. The active-site Proton acceptor is the Glu168. Substrate-binding positions include Gly174, Ser214, and 235–236 (GG).

Belongs to the triosephosphate isomerase family. In terms of assembly, homodimer.

It localises to the cytoplasm. The catalysed reaction is D-glyceraldehyde 3-phosphate = dihydroxyacetone phosphate. Its pathway is carbohydrate biosynthesis; gluconeogenesis. It participates in carbohydrate degradation; glycolysis; D-glyceraldehyde 3-phosphate from glycerone phosphate: step 1/1. Functionally, involved in the gluconeogenesis. Catalyzes stereospecifically the conversion of dihydroxyacetone phosphate (DHAP) to D-glyceraldehyde-3-phosphate (G3P). The polypeptide is Triosephosphate isomerase (Lactobacillus delbrueckii subsp. bulgaricus (strain ATCC 11842 / DSM 20081 / BCRC 10696 / JCM 1002 / NBRC 13953 / NCIMB 11778 / NCTC 12712 / WDCM 00102 / Lb 14)).